Consider the following 246-residue polypeptide: 3-deoxy-manno-octulosonate cytidylyltransferase (246 aa).

This sequence belongs to the KdsB family. In terms of assembly, homodimer.

It is found in the cytoplasm. It carries out the reaction 3-deoxy-alpha-D-manno-oct-2-ulosonate + CTP = CMP-3-deoxy-beta-D-manno-octulosonate + diphosphate. Its pathway is nucleotide-sugar biosynthesis; CMP-3-deoxy-D-manno-octulosonate biosynthesis; CMP-3-deoxy-D-manno-octulosonate from 3-deoxy-D-manno-octulosonate and CTP: step 1/1. The protein operates within bacterial outer membrane biogenesis; lipopolysaccharide biosynthesis. Its function is as follows. Activates KDO (a required 8-carbon sugar) for incorporation into bacterial lipopolysaccharide in Gram-negative bacteria. The protein is 3-deoxy-manno-octulosonate cytidylyltransferase (kpsU) of Escherichia coli.